A 254-amino-acid chain; its full sequence is Ribosomal RNA small subunit methyltransferase J (254 aa).

S-adenosyl-L-methionine contacts are provided by residues 107–108, 123–124, and aspartate 177; these read RD and ER.

This sequence belongs to the methyltransferase superfamily. RsmJ family.

The protein localises to the cytoplasm. It catalyses the reaction guanosine(1516) in 16S rRNA + S-adenosyl-L-methionine = N(2)-methylguanosine(1516) in 16S rRNA + S-adenosyl-L-homocysteine + H(+). Its function is as follows. Specifically methylates the guanosine in position 1516 of 16S rRNA. The chain is Ribosomal RNA small subunit methyltransferase J from Histophilus somni (strain 129Pt) (Haemophilus somnus).